The primary structure comprises 553 residues: MSDIALTVSVLALVAVVGLWIGNIKIRGVGLGIGGVLFGGIFIGHFAEQLGITLSAEMLHFIQEFGLILFVYTIGIQVGPGFFASLRVSGLRLNLFALGIVVMGGVVTAILHKLFEIPLPVVLGIFSGAVTNTPALGAGQQILRDLGIAPDVVDQMGMSYAMAYPFGICGILLTMWLVRVLFRINVDDEAKKHESAITNGHALIKTINIRVENPNLSNMAIQDVPILNSISIICSRLKRGDMLMVPSPGTVIQIGDLLHLVGQPGDLHSAQLVIGQEVETSLSTRGTDMRVERVVVTNEQVLGKKIRDLQVKERYDVVISRLNRAGVELVASPDASLQFGDILNLVGRPSSIDAVADMVGNAQQKLQQVQMLPVFIGIGLGVLLGSIPLYVPGFPVALKLGLAGGPLIMALILGRIGCIGKLYWFMPPSANLALRELGIVLFLSVVGLKSGGDFIDTLAHGEGISWIGYGFFITAVPLLTIGILARIFTNMNYLTLCGMLAGSMTDPPALAFANNLHATSGAAALSYATVYPLVMFLRIITPQLLAVLFWGMG.

5 helical membrane passes run 4–24, 28–48, 65–85, 95–115, and 158–178; these read IALT…IGNI, GVGL…HFAE, FGLI…FFAS, LFAL…HKLF, and MSYA…MWLV. 2 RCK C-terminal domains span residues 191 to 276 and 279 to 361; these read KKHE…VIGQ and ETSL…MVGN. 6 consecutive transmembrane segments (helical) span residues 371-391, 403-425, 439-459, 464-484, 493-513, and 533-553; these read MLPV…PLYV, AGGP…LYWF, IVLF…DTLA, ISWI…IGIL, YLTL…LAFA, and LVMF…WGMG.

This sequence belongs to the AAE transporter (TC 2.A.81) family. YidE subfamily.

Its subcellular location is the cell membrane. This Enterobacter sp. (strain 638) protein is Putative transport protein Ent638_0015.